We begin with the raw amino-acid sequence, 153 residues long: Transcriptional repressor NrdR (153 aa).

A zinc finger lies at 3-34; that stretch reads CPFCAHDDSQVKDSRPAEDNAAIRRRRQCSKC. Residues 49-139 enclose the ATP-cone domain; it reads VTVVKSDDKR…VYRDFSEARD (91 aa).

The protein belongs to the NrdR family. It depends on Zn(2+) as a cofactor.

In terms of biological role, negatively regulates transcription of bacterial ribonucleotide reductase nrd genes and operons by binding to NrdR-boxes. The protein is Transcriptional repressor NrdR of Erythrobacter litoralis (strain HTCC2594).